The sequence spans 1074 residues: BRD4-interacting chromatin-remodeling complex-associated protein-like (1074 aa).

Disordered regions lie at residues 542–603 (AVSS…NTPG), 620–689 (TSPI…GQKR), 834–874 (TPLD…HDQF), and 887–952 (GNIS…SKLP). Composition is skewed to polar residues over residues 544 to 576 (SSASTAHPTLGPTVQSGAPGSNFTGDQLTQANR), 591 to 603 (ASKSPSTLSNTPG), 620 to 629 (TSPIPTSKTT), and 660 to 680 (GATQAQPESSVGSSPSQTAVQ). Ser-621 bears the Phosphoserine mark. Basic and acidic residues-rich tracts occupy residues 889 to 904 (ISKKSEGHSRTLKFDR), 913 to 925 (PPEDKGGRRDPAK), and 934 to 948 (EGHRKSLPRPDHGSE). Ser-976 is modified (phosphoserine).

In terms of assembly, component of the multiprotein chromatin-remodeling complexes SWI/SNF: SWI/SNF-A (BAF), SWI/SNF-B (PBAF) and related complexes. The canonical complex contains a catalytic subunit (either SMARCA4/BRG1/BAF190A or SMARCA2/BRM/BAF190B) and at least SMARCE1, ACTL6A/BAF53, SMARCC1/BAF155, SMARCC2/BAF170, and SMARCB1/SNF5/BAF47. Other subunits specific to each of the complexes may also be present permitting several possible combinations developmentally and tissue specific. Component of the SWI/SNF (GBAF) subcomplex, which includes at least BICRA or BICRAL (mutually exclusive), BRD9, SS18, the core BAF subunits, SMARCA2/BRM, SMARCA4/BRG1/BAF190A, ACTL6A/BAF53, SMARCC1/BAF155, and SMARCD1/BAF60A.

Component of SWI/SNF chromatin remodeling subcomplex GBAF that carries out key enzymatic activities, changing chromatin structure by altering DNA-histone contacts within a nucleosome in an ATP-dependent manner. The protein is BRD4-interacting chromatin-remodeling complex-associated protein-like of Mus musculus (Mouse).